Here is a 311-residue protein sequence, read N- to C-terminus: Ceroid-lipofuscinosis neuronal protein 6 (311 aa).

7 helical membrane passes run 56–76 (WVLD…WFPL), 81–101 (VGDY…LKLI), 111–131 (SITY…LVGD), 179–199 (CMWY…CFTA), 204–224 (SLIP…YWYL), 225–245 (VTEG…LALV), and 260–280 (LFLF…VAWL).

In terms of assembly, interacts with CRMP2. Interacts with CLN5. Interacts with CLN3.

Its subcellular location is the endoplasmic reticulum membrane. The protein localises to the endoplasmic reticulum. This chain is Ceroid-lipofuscinosis neuronal protein 6 (CLN6), found in Homo sapiens (Human).